Consider the following 390-residue polypeptide: Probable tRNA pseudouridine synthase D 2 (390 aa).

D93 serves as the catalytic Nucleophile. Positions 166–353 (YVLNYYGIQR…YGTRRKMVTP (188 aa)) constitute a TRUD domain.

The protein belongs to the pseudouridine synthase TruD family.

The enzyme catalyses uridine(13) in tRNA = pseudouridine(13) in tRNA. Functionally, could be responsible for synthesis of pseudouridine from uracil-13 in transfer RNAs. This is Probable tRNA pseudouridine synthase D 2 from Methanococcus maripaludis (strain DSM 14266 / JCM 13030 / NBRC 101832 / S2 / LL).